We begin with the raw amino-acid sequence, 122 residues long: Small ribosomal subunit protein uS13 (122 aa).

Residues 92–122 are disordered; it reads HRMGLPVRGQRTKTNARTRKGPSKPVSGKKK. Residues 101-122 are compositionally biased toward basic residues; the sequence is QRTKTNARTRKGPSKPVSGKKK.

It belongs to the universal ribosomal protein uS13 family. In terms of assembly, part of the 30S ribosomal subunit. Forms a loose heterodimer with protein S19. Forms two bridges to the 50S subunit in the 70S ribosome.

In terms of biological role, located at the top of the head of the 30S subunit, it contacts several helices of the 16S rRNA. In the 70S ribosome it contacts the 23S rRNA (bridge B1a) and protein L5 of the 50S subunit (bridge B1b), connecting the 2 subunits; these bridges are implicated in subunit movement. Contacts the tRNAs in the A and P-sites. The protein is Small ribosomal subunit protein uS13 of Ruminiclostridium cellulolyticum (strain ATCC 35319 / DSM 5812 / JCM 6584 / H10) (Clostridium cellulolyticum).